The chain runs to 619 residues: ATP-dependent DNA helicase RecQ (619 aa).

In terms of domain architecture, Helicase ATP-binding spans 37-205 (INAALNGQDA…LRHLNLKNLH (169 aa)). An ATP-binding site is contributed by 50-57 (MATGNGKS). The DEAH box motif lies at 149–152 (DEAH). The 146-residue stretch at 229 to 374 (QLTRFVLAQK…QIEQHKLEAI (146 aa)) folds into the Helicase C-terminal domain. 4 residues coordinate Zn(2+): cysteine 383, cysteine 400, cysteine 403, and cysteine 406. The HRDC domain occupies 535–615 (ANYDKDLFAR…QEHKAILANA (81 aa)).

This sequence belongs to the helicase family. RecQ subfamily. Requires Mg(2+) as cofactor. The cofactor is Zn(2+).

It carries out the reaction Couples ATP hydrolysis with the unwinding of duplex DNA by translocating in the 3'-5' direction.. The enzyme catalyses ATP + H2O = ADP + phosphate + H(+). Its function is as follows. An ATP-dependent DNA helicase which unwinds DNA in a 3'-5' direction. Plays a role in recombination. The chain is ATP-dependent DNA helicase RecQ from Haemophilus influenzae (strain ATCC 51907 / DSM 11121 / KW20 / Rd).